We begin with the raw amino-acid sequence, 851 residues long: Thrombospondin type-1 domain-containing protein 1 (851 aa).

The first 24 residues, 1–24 (MKPMLKDFSNLLLVVLCDYVLGEA), serve as a signal peptide directing secretion. At 25-412 (EYLLLQEPVH…SPQDPVKSNN (388 aa)) the chain is on the extracellular side. N-linked (GlcNAc...) asparagine glycosylation is found at N53, N58, N69, N110, N135, and N304. In terms of domain architecture, TSP type-1 spans 339 to 392 (IETWGPWQPWSPCSTTCGDAVRERRRLCVTSFPSRPSCSGMSSETSPCSLEECA). Disulfide bonds link C351–C386, C355–C391, and C366–C376. A helical membrane pass occupies residues 413-433 (VVTVTGISLCLFIIFATVLIT). The Cytoplasmic portion of the chain corresponds to 434–851 (LWRRFGRAPK…STLSVEKLVI (418 aa)). Residue S462 is modified to Phosphoserine. 3 disordered regions span residues 471 to 516 (SEPR…ESFQ), 626 to 646 (KSQIRSTGGRDGSSERCHSRS), and 682 to 777 (SRMR…SSPI). Over residues 685–695 (RTWDQMEDRCR) the composition is skewed to basic and acidic residues. Residues 765–776 (SHRSASRKQSSP) are compositionally biased toward polar residues.

Part of a complex composed of THSD1, PTK2/FAK1, TLN1 and VCL. Interacts with TLN1. Expressed in cerebral vascular endothelium.

The protein localises to the endosome membrane. The protein resides in the cell junction. It localises to the focal adhesion. Is a positive regulator of nascent focal adhesion assembly, involved in the modulation of endothelial cell attachment to the extracellular matrix. The chain is Thrombospondin type-1 domain-containing protein 1 (Thsd1) from Mus musculus (Mouse).